The sequence spans 130 residues: Small ribosomal subunit protein eS8 (130 aa).

The protein belongs to the eukaryotic ribosomal protein eS8 family. As to quaternary structure, part of the 30S ribosomal subunit.

In Thermococcus gammatolerans (strain DSM 15229 / JCM 11827 / EJ3), this protein is Small ribosomal subunit protein eS8.